Consider the following 449-residue polypeptide: SUPPRESSOR OF GAMMA RESPONSE 1 (449 aa).

The 154-residue stretch at 58-211 folds into the NAC domain; the sequence is LPRGVKFDPS…DYVVSKIFYQ (154 aa). A DNA-binding region spans residues 167-217; it reads RGCKKIMVLYGGKAVKTNWVMHQYHLGIEEDEKEGDYVVSKIFYQQPQQLV. The span at 324-336 shows a compositional bias: basic and acidic residues; the sequence is DDKEEQEKDRDNE. The tract at residues 324-348 is disordered; that stretch reads DDKEEQEKDRDNENQGEEDPTWFDS.

Phosphorylated in a DNA stress-independent manner. Hyperphosphorylated on SQ motifs upon double-strand breaks, H(2)O(2) or zeocin treatments. Hyperphosphorylation is required for SOG1 function, and unlike constitutive phosphorylation, is ATM dependent. As to expression, expressed in shoot and root apical meristems, in lateral root primordia, in the vasculature of young leaves and in the root stele.

The protein resides in the nucleus. Its function is as follows. Transcription factor regulating the transcriptional activation response to gamma irradiation. Required for stem-cell death induced by UVB or by gamma irradiation. Not required for ATM activation, but participates in pathways governed by both ATM and ATR sensor kinases. Involved in DNA damage response (DDR) system that regulates cell cycle arrest. Functional homolog of animal p53. Regulates SMR5 and SMR7 transcription. Regulates DNA repair and cytokinin signaling separately and plays a key role in controlling lateral root formation under genotoxic stress. The polypeptide is SUPPRESSOR OF GAMMA RESPONSE 1 (Arabidopsis thaliana (Mouse-ear cress)).